A 272-amino-acid chain; its full sequence is 2,3,4,5-tetrahydropyridine-2,6-dicarboxylate N-succinyltransferase (272 aa).

Substrate contacts are provided by Arg104 and Asp141.

Belongs to the transferase hexapeptide repeat family. Homotrimer.

It is found in the cytoplasm. It carries out the reaction (S)-2,3,4,5-tetrahydrodipicolinate + succinyl-CoA + H2O = (S)-2-succinylamino-6-oxoheptanedioate + CoA. The protein operates within amino-acid biosynthesis; L-lysine biosynthesis via DAP pathway; LL-2,6-diaminopimelate from (S)-tetrahydrodipicolinate (succinylase route): step 1/3. The sequence is that of 2,3,4,5-tetrahydropyridine-2,6-dicarboxylate N-succinyltransferase from Alkalilimnicola ehrlichii (strain ATCC BAA-1101 / DSM 17681 / MLHE-1).